A 769-amino-acid chain; its full sequence is Serine protease HtrA-like (769 aa).

Basic residues predominate over residues Met1–Glu20. The tract at residues Met1–Ala390 is disordered. Composition is skewed to basic and acidic residues over residues Phe21 to Lys64 and Leu71 to Lys108. Residues Tyr126–Lys137 show a composition bias toward polar residues. Residues Ser138–Ser186 are compositionally biased toward basic and acidic residues. Residues Gln247–Ser262 show a composition bias toward polar residues. Composition is skewed to basic and acidic residues over residues Gln264–Asp296 and Lys310–Asn330. A compositionally biased stretch (polar residues) spans Ala331 to His347. The segment covering Arg348–Asn364 has biased composition (basic and acidic residues). Residues Gly365–Ala390 are compositionally biased toward polar residues. Residues Leu410–Val430 form a helical membrane-spanning segment. Active-site charge relay system residues include His504, Asp534, and Ser619. Residues Ile680–Asp733 enclose the PDZ domain.

The protein belongs to the peptidase S1C family.

It is found in the cell membrane. This chain is Serine protease HtrA-like, found in Staphylococcus aureus (strain COL).